We begin with the raw amino-acid sequence, 480 residues long: Siroheme synthase (480 aa).

A precorrin-2 dehydrogenase /sirohydrochlorin ferrochelatase region spans residues 1–203 (MNYFPIFANL…QQTAQAEQEL (203 aa)). NAD(+)-binding positions include 22–23 (SV) and 43–44 (NQ). Phosphoserine is present on S128. Residues 214-480 (GFVSLVGAGP…GGLNAGQRAA (267 aa)) form a uroporphyrinogen-III C-methyltransferase region. Position 223 (P223) interacts with S-adenosyl-L-methionine. D246 functions as the Proton acceptor in the catalytic mechanism. The active-site Proton donor is the K268. Residues 299 to 301 (GGD), V304, 329 to 330 (TA), M381, and G410 contribute to the S-adenosyl-L-methionine site.

It in the N-terminal section; belongs to the precorrin-2 dehydrogenase / sirohydrochlorin ferrochelatase family. The protein in the C-terminal section; belongs to the precorrin methyltransferase family.

It catalyses the reaction uroporphyrinogen III + 2 S-adenosyl-L-methionine = precorrin-2 + 2 S-adenosyl-L-homocysteine + H(+). The enzyme catalyses precorrin-2 + NAD(+) = sirohydrochlorin + NADH + 2 H(+). The catalysed reaction is siroheme + 2 H(+) = sirohydrochlorin + Fe(2+). The protein operates within cofactor biosynthesis; adenosylcobalamin biosynthesis; precorrin-2 from uroporphyrinogen III: step 1/1. It participates in cofactor biosynthesis; adenosylcobalamin biosynthesis; sirohydrochlorin from precorrin-2: step 1/1. Its pathway is porphyrin-containing compound metabolism; siroheme biosynthesis; precorrin-2 from uroporphyrinogen III: step 1/1. It functions in the pathway porphyrin-containing compound metabolism; siroheme biosynthesis; siroheme from sirohydrochlorin: step 1/1. The protein operates within porphyrin-containing compound metabolism; siroheme biosynthesis; sirohydrochlorin from precorrin-2: step 1/1. In terms of biological role, multifunctional enzyme that catalyzes the SAM-dependent methylations of uroporphyrinogen III at position C-2 and C-7 to form precorrin-2 via precorrin-1. Then it catalyzes the NAD-dependent ring dehydrogenation of precorrin-2 to yield sirohydrochlorin. Finally, it catalyzes the ferrochelation of sirohydrochlorin to yield siroheme. This Neisseria meningitidis serogroup C (strain 053442) protein is Siroheme synthase.